The primary structure comprises 505 residues: RNA-splicing ligase RtcB homolog (505 aa).

Asp119, Cys122, His227, His259, and His353 together coordinate Mn(2+). GMP is bound at residue 226-230; the sequence is NHYAE. Residues 353 to 354, 402 to 405, Ser409, 428 to 431, and Lys504 contribute to the GMP site; these read HN, GGTM, and HGAG. The active-site GMP-histidine intermediate is the His428.

It belongs to the RtcB family. Catalytic component of the tRNA-splicing ligase complex. Requires Mn(2+) as cofactor.

It is found in the nucleus. The protein resides in the cytoplasm. It catalyses the reaction a 3'-end 3'-phospho-ribonucleotide-RNA + a 5'-end dephospho-ribonucleoside-RNA + GTP = a ribonucleotidyl-ribonucleotide-RNA + GMP + diphosphate. The enzyme catalyses a 3'-end 2',3'-cyclophospho-ribonucleotide-RNA + a 5'-end dephospho-ribonucleoside-RNA + GTP + H2O = a ribonucleotidyl-ribonucleotide-RNA + GMP + diphosphate + H(+). In terms of biological role, catalytic subunit of the tRNA-splicing ligase complex that acts by directly joining spliced tRNA halves to mature-sized tRNAs by incorporating the precursor-derived splice junction phosphate into the mature tRNA as a canonical 3',5'-phosphodiester. May act as an RNA ligase with broad substrate specificity, and may function toward other RNAs. This chain is RNA-splicing ligase RtcB homolog, found in Danio rerio (Zebrafish).